A 402-amino-acid polypeptide reads, in one-letter code: CCA-adding enzyme (402 aa).

G32 and R35 together coordinate ATP. CTP-binding residues include G32 and R35. Positions 45 and 47 each coordinate Mg(2+). R116, D159, R162, R165, and R168 together coordinate ATP. CTP is bound by residues R116, D159, R162, R165, and R168.

Belongs to the tRNA nucleotidyltransferase/poly(A) polymerase family. Bacterial CCA-adding enzyme type 3 subfamily. As to quaternary structure, homodimer. Mg(2+) is required as a cofactor.

The catalysed reaction is a tRNA precursor + 2 CTP + ATP = a tRNA with a 3' CCA end + 3 diphosphate. It carries out the reaction a tRNA with a 3' CCA end + 2 CTP + ATP = a tRNA with a 3' CCACCA end + 3 diphosphate. Functionally, catalyzes the addition and repair of the essential 3'-terminal CCA sequence in tRNAs without using a nucleic acid template. Adds these three nucleotides in the order of C, C, and A to the tRNA nucleotide-73, using CTP and ATP as substrates and producing inorganic pyrophosphate. tRNA 3'-terminal CCA addition is required both for tRNA processing and repair. Also involved in tRNA surveillance by mediating tandem CCA addition to generate a CCACCA at the 3' terminus of unstable tRNAs. While stable tRNAs receive only 3'-terminal CCA, unstable tRNAs are marked with CCACCA and rapidly degraded. The chain is CCA-adding enzyme from Streptococcus thermophilus (strain CNRZ 1066).